A 207-amino-acid polypeptide reads, in one-letter code: Inhibitor of hydrogen peroxide resistance (207 aa).

The segment at residues 163 to 182 (MNYIHQRTRISRSVVAEVLA) is a DNA-binding region (H-T-H motif).

This sequence belongs to the IprA family.

Involved in oxidative stress resistance. The chain is Inhibitor of hydrogen peroxide resistance from Escherichia coli O157:H7.